Reading from the N-terminus, the 364-residue chain is F-box/LRR-repeat protein At1g55660 (364 aa).

One can recognise an F-box domain in the interval 52-98 (MDKISQLPDELLVKVLSFLSTKDAVSTSILSMRWKSLWMWLPKLEYN). 6 LRR repeats span residues 158-179 (NVRE…LPKS), 185-206 (SIVI…VCLP), 207-228 (SLKT…HRLL), 233-254 (VLED…SVIV), 256-277 (SLQR…KMNS), and 279-300 (SLKY…ESDS).

In Arabidopsis thaliana (Mouse-ear cress), this protein is F-box/LRR-repeat protein At1g55660.